We begin with the raw amino-acid sequence, 191 residues long: Peptidyl-tRNA hydrolase (191 aa).

Y16 lines the tRNA pocket. The active-site Proton acceptor is the H21. The tRNA site is built by F66, N68, and N114.

It belongs to the PTH family. In terms of assembly, monomer.

It localises to the cytoplasm. It carries out the reaction an N-acyl-L-alpha-aminoacyl-tRNA + H2O = an N-acyl-L-amino acid + a tRNA + H(+). Hydrolyzes ribosome-free peptidyl-tRNAs (with 1 or more amino acids incorporated), which drop off the ribosome during protein synthesis, or as a result of ribosome stalling. Functionally, catalyzes the release of premature peptidyl moieties from peptidyl-tRNA molecules trapped in stalled 50S ribosomal subunits, and thus maintains levels of free tRNAs and 50S ribosomes. The chain is Peptidyl-tRNA hydrolase from Geotalea uraniireducens (strain Rf4) (Geobacter uraniireducens).